The sequence spans 672 residues: Protein seu-1 (672 aa).

Disordered regions lie at residues 1–463 and 576–672; these read MSSI…AGTE and LAPP…LKHL. Positions 8-20 are enriched in basic and acidic residues; it reads NDNRRPTFRDHRT. Gly residues predominate over residues 25–34; the sequence is GRGGSGGGGR. Residues 62-85 show a composition bias toward basic and acidic residues; the sequence is RSQDHRQRSPEVRRHRSPEKESKD. Low complexity predominate over residues 87–105; the sequence is VVTSTGSSRGATSASVTSS. 4 stretches are compositionally biased toward basic and acidic residues: residues 107-138, 189-226, 234-268, and 289-306; these read RRHE…DADR, VSRH…KSNG, RRRE…KVED, and EQAK…ESHQ. Residues 307 to 317 are compositionally biased toward low complexity; that stretch reads SAHSAAVSNAS. Positions 322–343 are enriched in acidic residues; the sequence is SEEELDYEEDDIDVDLDGDIDV. Composition is skewed to basic and acidic residues over residues 366–375, 382–396, 410–424, 436–447, 607–626, and 636–659; these read NDVKDETMEE, PEKK…DDKD, RRED…SDHH, RATDHKESRRSE, SFGD…RHMD, and DHRV…ERGF.

As to expression, highly expressed in intestinal cells, lateral hypodermal (seam) cells, Pn.p ventral hypodermal cells, and spermatheca. Expressed at low levels in the ventral nerve cord.

Its subcellular location is the nucleus. In terms of biological role, together with unc-5, involved in touch neuron axon guidance. During gonad morphogenesis, plays a role in the unc-5-/unc-6-mediated migration of distal tip cells along the body. The chain is Protein seu-1 from Caenorhabditis elegans.